The primary structure comprises 215 residues: Probable phosphoglycerate mutase GpmB (215 aa).

Substrate is bound by residues 8 to 15, 21 to 22, arginine 58, 82 to 85, 104 to 105, and 151 to 152; these read RHGETQWN, QG, ELDM, RR, and GM. Histidine 9 functions as the Tele-phosphohistidine intermediate in the catalytic mechanism. The Proton donor/acceptor role is filled by glutamate 82.

The protein belongs to the phosphoglycerate mutase family. GpmB subfamily.

The catalysed reaction is (2R)-2-phosphoglycerate = (2R)-3-phosphoglycerate. It participates in carbohydrate degradation; glycolysis; pyruvate from D-glyceraldehyde 3-phosphate: step 3/5. This chain is Probable phosphoglycerate mutase GpmB, found in Cronobacter sakazakii (strain ATCC BAA-894) (Enterobacter sakazakii).